Reading from the N-terminus, the 424-residue chain is Nicotinate phosphoribosyltransferase (424 aa).

Residue histidine 242 is modified to Phosphohistidine; by autocatalysis.

It belongs to the NAPRTase family. In terms of processing, transiently phosphorylated on a His residue during the reaction cycle. Phosphorylation strongly increases the affinity for substrates and increases the rate of nicotinate D-ribonucleotide production. Dephosphorylation regenerates the low-affinity form of the enzyme, leading to product release.

The enzyme catalyses nicotinate + 5-phospho-alpha-D-ribose 1-diphosphate + ATP + H2O = nicotinate beta-D-ribonucleotide + ADP + phosphate + diphosphate. It functions in the pathway cofactor biosynthesis; NAD(+) biosynthesis; nicotinate D-ribonucleotide from nicotinate: step 1/1. Functionally, catalyzes the synthesis of beta-nicotinate D-ribonucleotide from nicotinate and 5-phospho-D-ribose 1-phosphate at the expense of ATP. The chain is Nicotinate phosphoribosyltransferase from Bartonella bacilliformis (strain ATCC 35685 / KC583 / Herrer 020/F12,63).